A 280-amino-acid polypeptide reads, in one-letter code: Mevalonyl-coenzyme A hydratase SIDH (280 aa).

The PTS1-type peroxisomal targeting signal signature appears at 278 to 280 (SKL).

It belongs to the enoyl-CoA hydratase/isomerase family.

It localises to the peroxisome. The protein operates within siderophore biosynthesis. Functionally, mevalonyl-coenzyme A hydratase; part of the gene cluster that mediates the biosynthesis of at least 11 siderophores, including beauverichelin A, dimerumic acid (DA), Na-dimethyl coprogen (NADC), eleutherazine B, ferricrocin (FC), fusarinine A, fusarinine C (FsC), metachelin A, mevalonolactone, rhodotorulic acid (RA) and tenellin. This cocktail of siderophores for iron metabolism is essential for virulence, and more specifically for the fungal virulence in penetrating through the host cuticle. Siderophore synthesis is also involved in conidial germination under iron-deficient conditions. For biosynthesis of fusarinine C, the transacylase SIDF transfers anhydromevalonyl to N(5)-hydroxyornithine. The required anhydromevalonyl-CoA moiety is derived from mevalonate by CoA ligation and dehydration catalyzed by SIDI and sidH respectively. SIDH is not essential for siderophore production, probably due to functional redundancy of this protein family, as there are 15 homologs of SIDH in B.bassiana. The sequence is that of Mevalonyl-coenzyme A hydratase SIDH from Beauveria bassiana (strain ARSEF 2860) (White muscardine disease fungus).